The chain runs to 162 residues: NADH-quinone oxidoreductase subunit C (162 aa).

This sequence belongs to the complex I 30 kDa subunit family. NDH-1 is composed of 14 different subunits. Subunits NuoB, C, D, E, F, and G constitute the peripheral sector of the complex.

It localises to the cell inner membrane. The enzyme catalyses a quinone + NADH + 5 H(+)(in) = a quinol + NAD(+) + 4 H(+)(out). In terms of biological role, NDH-1 shuttles electrons from NADH, via FMN and iron-sulfur (Fe-S) centers, to quinones in the respiratory chain. The immediate electron acceptor for the enzyme in this species is believed to be ubiquinone. Couples the redox reaction to proton translocation (for every two electrons transferred, four hydrogen ions are translocated across the cytoplasmic membrane), and thus conserves the redox energy in a proton gradient. The sequence is that of NADH-quinone oxidoreductase subunit C from Geobacter metallireducens (strain ATCC 53774 / DSM 7210 / GS-15).